Here is a 198-residue protein sequence, read N- to C-terminus: Recombination protein RecR (198 aa).

The segment at 57 to 72 (CEKCNTFTEAQICEVC) adopts a C4-type zinc-finger fold. Residues 80-175 (TLLCVVETPA…AVTRLARGVP (96 aa)) enclose the Toprim domain.

The protein belongs to the RecR family.

Functionally, may play a role in DNA repair. It seems to be involved in an RecBC-independent recombinational process of DNA repair. It may act with RecF and RecO. The polypeptide is Recombination protein RecR (Burkholderia vietnamiensis (strain G4 / LMG 22486) (Burkholderia cepacia (strain R1808))).